A 28-amino-acid chain; its full sequence is Putative antitoxin AF_1079 (28 aa).

This sequence belongs to the UPF0165 family.

Functionally, possibly the antitoxin component of a type II toxin-antitoxin (TA) system. This chain is Putative antitoxin AF_1079, found in Archaeoglobus fulgidus (strain ATCC 49558 / DSM 4304 / JCM 9628 / NBRC 100126 / VC-16).